The chain runs to 413 residues: Alpha-1-antitrypsin 1-1 (413 aa).

The first 24 residues, 1–24, serve as a signal peptide directing secretion; sequence MTPSISWGLLLLAGLCCLVPSFLA. Residues N64, N101, and N265 are each glycosylated (N-linked (GlcNAc...) asparagine). The segment at 368-387 is RCL; it reads AVTVLQMVPMSMPPILRFDH.

The protein belongs to the serpin family.

It localises to the secreted. Functionally, inhibitor of serine proteases. Its primary target is elastase, but it also has a moderate affinity for plasmin and thrombin. In Mus musculus (Mouse), this protein is Alpha-1-antitrypsin 1-1 (Serpina1a).